Consider the following 231-residue polypeptide: Small ribosomal subunit protein uS3 (231 aa).

A KH type-2 domain is found at 18–97 (VDEYLAKQFY…NPELNARVMA (80 aa)).

It belongs to the universal ribosomal protein uS3 family. In terms of assembly, part of the 30S ribosomal subunit.

Its function is as follows. Binds the lower part of the 30S subunit head. The chain is Small ribosomal subunit protein uS3 from Sulfolobus acidocaldarius (strain ATCC 33909 / DSM 639 / JCM 8929 / NBRC 15157 / NCIMB 11770).